The primary structure comprises 947 residues: Zinc finger protein 268 (947 aa).

The KRAB domain occupies 81 to 152 (LSFMDVFVDF…QAQVPNQTCP (72 aa)). A Phosphoserine; by TBK1 modification is found at serine 178. C2H2-type zinc fingers lie at residues 276 to 298 (FGCSCCEKAFSSKSYLLVHQQTH), 304 to 326 (YGCNECGKDFSSKSYLIVHQRIH), 332 to 354 (HECSECRKTFSFHSQLVIHQRIH), 360 to 382 (YECCECGKVFSRKDQLVSHQKTH), 388 to 410 (YVCNECGKAFGLKSQLIIHERIH), 416 to 438 (YECNECQKAFNTKSNLMVHQRTH), 444 to 466 (YVCSDCGKAFTFKSQLIVHQGIH), 472 to 494 (YGCIQCGKGFSLKSQLIVHQRSH), 500 to 522 (YVCNECGKAFRSKSYLIIHTRTH), 528 to 550 (HECNNCGKAFSFKSQLIIHQRIH), 556 to 578 (YECHECGKAFSRKYQLISHQRTH), 584 to 606 (YECTDCGKAFGLKSQLIIHQRTH), 612 to 634 (FECSECQKAFNTKSNLIVHQRTH), 640 to 662 (YSCNECGKAFTFKSQLIVHKGVH), 668 to 690 (YGCSQCAKTFSLKSQLIVHQRSH), 696 to 718 (YGCSECGKAFRSKSYLIIHMRTH), 724 to 746 (HECRECGKSFSFNSQLIVHQRIH), 752 to 774 (YECSECGKAFNRKDQLISHQRTH), 780 to 802 (YGCSECGKAFSSKSYLIIHMRTH), 808 to 830 (YECNECGKAFIWKSLLIVHERTH), 836 to 858 (YKCSQCEKSFSGKLRLLVHQRMH), 864 to 886 (YECSECGKAFIRNSQLIVHQRTH), 892 to 914 (YGCNECGKTFSQKSILSAHQRTH), and 920 to 942 (CKCTECGKAFCWKSQLIMHQRTH).

It belongs to the krueppel C2H2-type zinc-finger protein family. Interacts (via the KRAB domain) with TRIM28 (via the RBCC domain); the interaction increases ZNF268 nuclear localization activity. Isoform 2 interacts with CHUK and IKBKB; the interaction is further increased in a TNF-alpha-dependent manner. Interacts with TOLLIP; this interaction is impaired by ZNF268 phosphorylation at Ser-178. Forms a ternary complex with TBK1 and SETD4; the interaction between SETD4 and TBK1 is ZNF268-dependent and leads to TBK1 monomethylation. Post-translationally, phosphorylation at Ser-178 stabilizes the protein by interfering with its binding to TOLLIP, hence impairing its degradation by Tollip-mediated selective autophagy system. In terms of tissue distribution, overexpressed in ovarian cancer tissues compared to normal ovarian tissues. Isoform 1 and isoform 2 are expressed in squamous epithelium tissues. Isoform 2 is overexpressed in squamous cervical cancer (at protein level). Expressed in blood cells. Isoform 1 is expressed in pancreas, lung, skeletal muscle, heart, placenta, liver, kidney and brain. Isoform 2 expressed in chronic lymphocytic leukemia (CLL) and several tumor cell lines. Isoform 3 is expressed in several tumor cells. Isoform 5 is expressed in fetal liver and several tumor cells. Isoform 6 is weakly expressed in brain, lung amd small intestin and in several tumor cells. Isoform 7 is expressed in fetal liver and several tumor cells.

The protein resides in the nucleus. The protein localises to the cytoplasm. Acts as a transcriptional repressor. Inhibits erythroid differentiation and tumor cell proliferation. Plays a role during ovarian cancer development and progression. Its function is as follows. Contributes to cervical carcinogenesis in part through the TNF-alpha-induced NF-kappa-B signaling pathway by interacting with the I-kappa-B-kinase (IKK) core complex. In terms of biological role, involved in the regulation of antiviral interferon signaling. During viral infection, recruits SETD4 to TBK1, leading to TBK1 monomethylation, which is critical for the assembly of TBK1 complex and IRF3 signaling. This chain is Zinc finger protein 268 (ZNF268), found in Homo sapiens (Human).